Here is a 270-residue protein sequence, read N- to C-terminus: MDWKKLQDLLSGVNQYSTAFGRIWLSVVFVFRVLVYVVAAERVWGDEQKDFDCNTRQPGCTNVCYDNFFPISNIRLWALQLIFVTCPSMLVILHVAYREERERKHRQKHGEHCAKLYSHPGKKHGGLWWTYLFSLIFKLIIELVFLYVLHTLWHGFTMPRLVQCASVVPCPNTVDCYIARPTEKKVFTYFMVGASAVCIILTICEICYLIFHRIMRGLSKDKSTKSISSPKSSSRASTCRCHHKLLESGDLEAVPADDKLQASAPSLTPI.

Over 1-20 (MDWKKLQDLLSGVNQYSTAF) the chain is Cytoplasmic. The helical transmembrane segment at 21–40 (GRIWLSVVFVFRVLVYVVAA) threads the bilayer. Residues 41-75 (ERVWGDEQKDFDCNTRQPGCTNVCYDNFFPISNIR) lie on the Extracellular side of the membrane. The helical transmembrane segment at 76 to 98 (LWALQLIFVTCPSMLVILHVAYR) threads the bilayer. Over 99 to 126 (EERERKHRQKHGEHCAKLYSHPGKKHGG) the chain is Cytoplasmic. A helical membrane pass occupies residues 127–149 (LWWTYLFSLIFKLIIELVFLYVL). Topologically, residues 150 to 188 (HTLWHGFTMPRLVQCASVVPCPNTVDCYIARPTEKKVFT) are extracellular. A helical membrane pass occupies residues 189 to 211 (YFMVGASAVCIILTICEICYLIF). Residues 212 to 270 (HRIMRGLSKDKSTKSISSPKSSSRASTCRCHHKLLESGDLEAVPADDKLQASAPSLTPI) lie on the Cytoplasmic side of the membrane.

It belongs to the connexin family. Beta-type (group I) subfamily. As to quaternary structure, a connexon is composed of a hexamer of connexins. Interacts with CNST.

The protein localises to the cell membrane. The protein resides in the cell junction. It is found in the gap junction. In terms of biological role, one gap junction consists of a cluster of closely packed pairs of transmembrane channels, the connexons, through which materials of low MW diffuse from one cell to a neighboring cell. In Rattus norvegicus (Rat), this protein is Gap junction beta-3 protein (Gjb3).